A 113-amino-acid chain; its full sequence is Cytochrome c55X (113 aa).

Residues 1–26 (MTVARHAVSRLGLALASFLLFPLALA) form the signal peptide. Heme c-binding residues include Cys-45, Cys-48, and His-49.

Post-translationally, binds 1 heme c group covalently per subunit.

It localises to the periplasm. In terms of biological role, monoheme c-type cytochrome. This Stutzerimonas stutzeri (Pseudomonas stutzeri) protein is Cytochrome c55X (nirC).